Here is a 170-residue protein sequence, read N- to C-terminus: Translation machinery-associated protein 16 homolog (170 aa).

The protein belongs to the TMA16 family.

The protein is Translation machinery-associated protein 16 homolog of Dictyostelium discoideum (Social amoeba).